An 839-amino-acid chain; its full sequence is ATP-binding cassette sub-family F member 1 (839 aa).

Residues 1 to 258 are disordered; that stretch reads MPKGPKQQPP…KKEKKKLKKQ (258 aa). Ser22 carries the phosphoserine modification. Residues 29-39 are compositionally biased toward basic residues; that stretch reads KKGKKDKKTKK. Over residues 47-64 the composition is skewed to basic and acidic residues; sequence VEDKQAGEEEKLQKEKEQ. Residues 71–83 are compositionally biased toward basic residues; it reads QKKKRDTRKGRRK. Residues Ser105, Ser109, and Ser140 each carry the phosphoserine modification. Acidic residues predominate over residues 136-149; the sequence is IQDESEEEKEEEEE. Residues 150 to 162 show a composition bias toward basic and acidic residues; it reads KPVLKPAKPEKNR. Phosphothreonine is present on Thr195. At Ser197 the chain carries Phosphoserine. A compositionally biased stretch (basic and acidic residues) spans 206–223; that stretch reads TKEKEPPRPGKDKDKKGA. Residue Ser227 is modified to Phosphoserine. Residues 247–256 show a composition bias toward basic residues; sequence LSKKEKKKLK. Positions 298 to 542 constitute an ABC transporter 1 domain; that stretch reads IKLEKFSISA…MYQQKQKELL (245 aa). Residue 330 to 337 participates in ATP binding; sequence GPNGKGKT. Residues 553 to 574 are compositionally biased toward basic and acidic residues; the sequence is KELKAGGKSTKQAEKQTKEVLT. The tract at residues 553–600 is disordered; it reads KELKAGGKSTKQAEKQTKEVLTRKQQKCRRKNQDEESQDPPELLKRPR. Ser589 is subject to Phosphoserine. Residues 619-834 form the ABC transporter 2 domain; the sequence is LGLHGVTFGY…VLEALGEVMV (216 aa). 652–659 provides a ligand contact to ATP; it reads GPNGVGKS.

In terms of assembly, interacts (via N-terminus) with EIF2S1; the interaction is independent of its phosphorylated status. Associates (via both ABC transporter domains) with the ribosomes. In terms of processing, phosphorylated at phosphoserine and phosphothreonine. Phosphorylation on Ser-109 and Ser-140 by CK2; inhibits association of EIF2 with ribosomes.

It is found in the cytoplasm. The protein resides in the nucleus. It localises to the nucleoplasm. The protein localises to the nucleus envelope. Its function is as follows. Required for efficient Cap- and IRES-mediated mRNA translation initiation. Not involved in the ribosome biogenesis. The chain is ATP-binding cassette sub-family F member 1 (Abcf1) from Rattus norvegicus (Rat).